A 723-amino-acid polypeptide reads, in one-letter code: Pentatricopeptide repeat-containing protein At5g50280, chloroplastic (723 aa).

A chloroplast-targeting transit peptide spans 1–44; that stretch reads MSMASSSLATQSFFSSFPLSHRLHFPVPYLLLRSSFFRKPLSLS. The tract at residues 70 to 97 is disordered; that stretch reads IQQPENSTINSEESECEEEDDEEGDDFT. Residues 81–97 show a composition bias toward acidic residues; that stretch reads EESECEEEDDEEGDDFT. PPR repeat units follow at residues 272-306, 307-342, 343-377, 378-412, 413-447, 448-483, 484-518, 519-553, 554-588, 589-623, and 624-658; these read DVRLYNAAISGLSASQRYDDAWEVYEAMDKINVYP, DNVTCAILITTLRKAGRSAKEVWEIFEKMSEKGVKW, SQDVFGGLVKSFCDEGLKEEALVIQTEMEKKGIRS, NTIVYNTLMDAYNKSNHIEEVEGLFTEMRDKGLKP, SAATYNILMDAYARRMQPDIVETLLREMEDLGLEP, NVKSYTCLISAYGRTKKMSDMAADAFLRMKKVGLKP, SSHSYTALIHAYSVSGWHEKAYASFEEMCKEGIKP, SVETYTSVLDAFRRSGDTGKLMEIWKLMLREKIKG, TRITYNTLLDGFAKQGLYIEARDVVSEFSKMGLQP, SVMTYNMLMNAYARGGQDAKLPQLLKEMAALNLKP, and DSITYSTMIYAFVRVRDFKRAFFYHKMMVKSGQVP. Residues 700 to 723 are disordered; the sequence is TKGKKDEFWKYKTNRTTSPGRHRS. Polar residues predominate over residues 713 to 723; the sequence is NRTTSPGRHRS.

This sequence belongs to the PPR family. P subfamily.

The protein localises to the plastid. It localises to the chloroplast. The chain is Pentatricopeptide repeat-containing protein At5g50280, chloroplastic (EMB1006) from Arabidopsis thaliana (Mouse-ear cress).